Reading from the N-terminus, the 907-residue chain is Protein translocase subunit SecA (907 aa).

Residues glutamine 87, glycine 105 to threonine 109, and aspartate 511 contribute to the ATP site. Positions 891, 893, 902, and 903 each coordinate Zn(2+).

This sequence belongs to the SecA family. As to quaternary structure, monomer and homodimer. Part of the essential Sec protein translocation apparatus which comprises SecA, SecYEG and auxiliary proteins SecDF-YajC and YidC. Zn(2+) serves as cofactor.

The protein localises to the cell inner membrane. Its subcellular location is the cytoplasm. It carries out the reaction ATP + H2O + cellular proteinSide 1 = ADP + phosphate + cellular proteinSide 2.. Functionally, part of the Sec protein translocase complex. Interacts with the SecYEG preprotein conducting channel. Has a central role in coupling the hydrolysis of ATP to the transfer of proteins into and across the cell membrane, serving both as a receptor for the preprotein-SecB complex and as an ATP-driven molecular motor driving the stepwise translocation of polypeptide chains across the membrane. The sequence is that of Protein translocase subunit SecA from Aromatoleum aromaticum (strain DSM 19018 / LMG 30748 / EbN1) (Azoarcus sp. (strain EbN1)).